Consider the following 150-residue polypeptide: Ribonuclease H (150 aa).

The RNase H type-1 domain maps to 1–141; it reads MKFIEVHTDG…VDVLARNQAI (141 aa). The Mg(2+) site is built by aspartate 9, glutamate 47, aspartate 69, and aspartate 133.

It belongs to the RNase H family. Monomer. Mg(2+) serves as cofactor.

It is found in the cytoplasm. It carries out the reaction Endonucleolytic cleavage to 5'-phosphomonoester.. Endonuclease that specifically degrades the RNA of RNA-DNA hybrids. This Xanthomonas euvesicatoria pv. vesicatoria (strain 85-10) (Xanthomonas campestris pv. vesicatoria) protein is Ribonuclease H.